Consider the following 144-residue polypeptide: MDPQEMVVKNPYAHISIPRAHLRPDLGQQLEVASTCSSSSEMQPLPVGPCAPEPTHLLQPTEVPGPKGAKGNQGAAPIQNQQAWQQPGNPYSSSQRQAGLTYAGPPPAGRGDDIAHHCCCCPCCHCCHCPPFCRCHSCCCCVIS.

The tract at residues 51–105 is disordered; sequence APEPTHLLQPTEVPGPKGAKGNQGAAPIQNQQAWQQPGNPYSSSQRQAGLTYAGP. Residues 78–98 are compositionally biased toward polar residues; the sequence is IQNQQAWQQPGNPYSSSQRQA.

This sequence belongs to the CYSRT1 family. As to quaternary structure, interacts with LCE1B; the interaction is direct. Interacts with LCE2C; the interaction is direct. Interacts with LCE3A; the interaction is direct. Interacts with LCE3C; the interaction is direct. Interacts with LCE4A; the interaction is direct. Interacts with LCE5A; the interaction is direct. Interacts with LCE1C. Interacts with LCE1D. Interacts with LCE1E. Interacts with LCE2A. Interacts with LCE3D. Interacts with LCE3E. Interacts with LCE1A. In terms of tissue distribution, expressed in the stratum granulosum, in skin and oral epithelia (at protein level).

The protein resides in the cornified envelope. Its function is as follows. Component of the stratum corneum that may contribute to epidermal antimicrobial host defenses. This chain is Cysteine-rich tail protein 1 (CYSRT1), found in Homo sapiens (Human).